Here is a 763-residue protein sequence, read N- to C-terminus: MSELLSFALFLASVLIYAWKAGRNTWWFAATLTVLGLFVVLNITLFASDYFTGDGINDAVLYTLTNSLTGAGVSKYILPGIGIVLGLAAVFGALGWILRRRRHHPHHFGYSLLALLLALGSVDASPAFRQITELVKSQSRDGDPDFAAYYKEPSKTIPDPKLNLVYIYGESLERTYFDNEAFPDLTPELGALKNEGLDFSHTQQLPGTDYTIAGMVASQCGIPLFAPFEGNASASVSSFFPQNICLGDILKNSGYQNYFVQGANLRFAGKDVFLKSHGFDHLYGSEELKSVVADPHYRNDWGFYDDTVLDEAWKKFEELSRSGQRFSLFTLTVDTHHPDGFISRTCNRKKYDFDGKPNQSFSAVSCSQENIATFINKIKASPWFKDTVIVVSSDHLAMNNTAWKYLNKQDRNNLFFVIRGDKPQQETLAVKRNTMDNGATVLDILGGDNYLGLGRSSLSGQSMSEIFLNIKEKTLAWKPDIIRLWKFPKEMKEFTIDQQKNMIAFSGSHFRLPLLLRVSDKRVEPLPESEYSAPLRFQLADFAPRDNFVWVDRCYKMAQLWAPELALSTDWCVSQGQLGGQQIVQHVDKAIWKGKTAFKDTVIDMARYKGNVDTLKIVDNDIRYKADSFIFNVAGAPEEVKQFSGISRPESWGRWSNAQLGDEVKIEYKHPLPKKFDLVITAKAYGNNASRPIPVRVGNEEQTLVLGNEVTTTTLHFDNPTDADTLVIVPPEPVSTNEGNILGHSPRKLGIGMVEIKVVEREG.

The next 4 helical transmembrane spans lie at 4-19, 26-48, 76-98, and 105-127; these read LLSFALFLASVLIYAW, WWFAATLTVLGLFVVLNITLFAS, YILPGIGIVLGLAAVFGALGWIL, and PHHFGYSLLALLLALGSVDASPA.

It belongs to the OpgB family.

It localises to the cell inner membrane. The enzyme catalyses a phosphatidylglycerol + a membrane-derived-oligosaccharide D-glucose = a 1,2-diacyl-sn-glycerol + a membrane-derived-oligosaccharide 6-(glycerophospho)-D-glucose.. Its pathway is glycan metabolism; osmoregulated periplasmic glucan (OPG) biosynthesis. Transfers a phosphoglycerol residue from phosphatidylglycerol to the membrane-bound nascent glucan backbones. The polypeptide is Phosphoglycerol transferase I (Escherichia coli O6:H1 (strain CFT073 / ATCC 700928 / UPEC)).